We begin with the raw amino-acid sequence, 656 residues long: Probable serine/threonine-protein kinase sky1 (656 aa).

The disordered stretch occupies residues 1–127; it reads MSDIQQDSTS…KQGGYHPVRR (127 aa). A compositionally biased stretch (gly residues) spans 16-48; sequence TSLGGTSLGGTSLGGTSLGGTSLGGTSLGGTSL. Composition is skewed to low complexity over residues 49–64 and 72–89; these read GGST…STNS and TSSN…NNNE. Polar residues predominate over residues 96 to 108; sequence AGSSNKSFMPLNN. One can recognise a Protein kinase domain in the interval 135–648; the sequence is YQVVDKLGWG…AKDCLNHTWL (514 aa). 141 to 149 lines the ATP pocket; that stretch reads LGWGHFSTV. Residues 157–185 form a disordered region; that stretch reads TPITTSSSSSSTTTTTTSSSSNGNGNGNG. Low complexity predominate over residues 160–179; it reads TTSSSSSSTTTTTTSSSSNG. Lysine 197 is a binding site for ATP. Aspartate 298 functions as the Proton acceptor in the catalytic mechanism. The disordered stretch occupies residues 330–454; sequence RTSSSNKQSQ…TTATATATTT (125 aa). Over residues 332 to 355 the composition is skewed to low complexity; that stretch reads SSSNKQSQQQQQPQQQQSQQNIND. 2 stretches are compositionally biased toward basic and acidic residues: residues 383–401 and 413–440; these read SNRD…DDNK and ENTD…KEEP. The span at 441–454 shows a compositional bias: low complexity; that stretch reads TTTTTTATATATTT.

The protein belongs to the protein kinase superfamily. CMGC Ser/Thr protein kinase family.

It catalyses the reaction L-seryl-[protein] + ATP = O-phospho-L-seryl-[protein] + ADP + H(+). It carries out the reaction L-threonyl-[protein] + ATP = O-phospho-L-threonyl-[protein] + ADP + H(+). In Dictyostelium discoideum (Social amoeba), this protein is Probable serine/threonine-protein kinase sky1 (sky1).